A 549-amino-acid polypeptide reads, in one-letter code: Cytoplasmic trehalase (549 aa).

Substrate-binding positions include R168, 175-176 (WD), N212, 221-223 (RSQ), 292-294 (RDE), and G324. Active-site proton donor/acceptor residues include D326 and E509. E525 is a substrate binding site.

The protein belongs to the glycosyl hydrolase 37 family. As to quaternary structure, monomer.

The protein resides in the cytoplasm. The enzyme catalyses alpha,alpha-trehalose + H2O = alpha-D-glucose + beta-D-glucose. It functions in the pathway glycan degradation; trehalose degradation; D-glucose from alpha,alpha-trehalose: step 1/1. In terms of biological role, hydrolyzes trehalose to glucose. Could be involved, in cells returning to low osmolarity conditions, in the utilization of the accumulated cytoplasmic trehalose, which was synthesized in response to high osmolarity. The polypeptide is Cytoplasmic trehalase (Shigella boydii serotype 4 (strain Sb227)).